The sequence spans 243 residues: MARKGPKRHLKRLAAPTSWYIERKAYKWAVRPRPGPHNMRTSIPLLYIVRDYLGYAKTAREARKILNEGKFLVDGRVRKDYKFPVGIMDVVSIPETGEHYRVLPNRIGKLILHPISEEEANIKPLRIRNKRMVKGAKIQLNFHDGTNHLIPLSEKDNYFTSYTVLMKVPEREILEVLPFEKGAYVFVTQGKNVARKGRIVEIKKFPMGWPDVVTIEDEEGELFDTLKEYAFVVGRDKPRISLP.

One can recognise an S4 RNA-binding domain in the interval 43-105 (IPLLYIVRDY…TGEHYRVLPN (63 aa)).

The protein belongs to the eukaryotic ribosomal protein eS4 family.

This Pyrococcus abyssi (strain GE5 / Orsay) protein is Small ribosomal subunit protein eS4 (rps4e).